The primary structure comprises 79 residues: ATP synthase subunit c (79 aa).

A run of 2 helical transmembrane segments spans residues 11 to 31 (IAVA…IGIL) and 53 to 73 (FFVV…LGLY).

It belongs to the ATPase C chain family. In terms of assembly, F-type ATPases have 2 components, F(1) - the catalytic core - and F(0) - the membrane proton channel. F(1) has five subunits: alpha(3), beta(3), gamma(1), delta(1), epsilon(1). F(0) has three main subunits: a(1), b(2) and c(10-14). The alpha and beta chains form an alternating ring which encloses part of the gamma chain. F(1) is attached to F(0) by a central stalk formed by the gamma and epsilon chains, while a peripheral stalk is formed by the delta and b chains.

It localises to the cell membrane. Functionally, f(1)F(0) ATP synthase produces ATP from ADP in the presence of a proton or sodium gradient. F-type ATPases consist of two structural domains, F(1) containing the extramembraneous catalytic core and F(0) containing the membrane proton channel, linked together by a central stalk and a peripheral stalk. During catalysis, ATP synthesis in the catalytic domain of F(1) is coupled via a rotary mechanism of the central stalk subunits to proton translocation. Its function is as follows. Key component of the F(0) channel; it plays a direct role in translocation across the membrane. A homomeric c-ring of between 10-14 subunits forms the central stalk rotor element with the F(1) delta and epsilon subunits. In Buchnera aphidicola subsp. Acyrthosiphon pisum (strain 5A), this protein is ATP synthase subunit c.